The chain runs to 389 residues: Lipid-A-disaccharide synthase (389 aa).

The protein belongs to the LpxB family.

It catalyses the reaction a lipid X + a UDP-2-N,3-O-bis[(3R)-3-hydroxyacyl]-alpha-D-glucosamine = a lipid A disaccharide + UDP + H(+). The protein operates within bacterial outer membrane biogenesis; LPS lipid A biosynthesis. Condensation of UDP-2,3-diacylglucosamine and 2,3-diacylglucosamine-1-phosphate to form lipid A disaccharide, a precursor of lipid A, a phosphorylated glycolipid that anchors the lipopolysaccharide to the outer membrane of the cell. This chain is Lipid-A-disaccharide synthase, found in Burkholderia cenocepacia (strain ATCC BAA-245 / DSM 16553 / LMG 16656 / NCTC 13227 / J2315 / CF5610) (Burkholderia cepacia (strain J2315)).